The following is a 417-amino-acid chain: Queuine tRNA-ribosyltransferase accessory subunit 2 (417 aa).

Zn(2+) contacts are provided by Cys-324, Cys-326, Cys-329, and His-355.

Belongs to the queuine tRNA-ribosyltransferase family. QTRT2 subfamily. As to quaternary structure, heterodimer of a catalytic subunit and an accessory subunit. Zn(2+) is required as a cofactor.

Its subcellular location is the cytoplasm. Its function is as follows. Non-catalytic subunit of the queuine tRNA-ribosyltransferase (TGT) that catalyzes the base-exchange of a guanine (G) residue with queuine (Q) at position 34 (anticodon wobble position) in tRNAs with GU(N) anticodons (tRNA-Asp, -Asn, -His and -Tyr), resulting in the hypermodified nucleoside queuosine (7-(((4,5-cis-dihydroxy-2-cyclopenten-1-yl)amino)methyl)-7-deazaguanosine). The protein is Queuine tRNA-ribosyltransferase accessory subunit 2 of Drosophila virilis (Fruit fly).